We begin with the raw amino-acid sequence, 548 residues long: 5-epi-aristolochene synthase 1 (548 aa).

5 residues coordinate Mg(2+): Asp-301, Asp-305, Asp-444, Thr-448, and Glu-452. A DDXXD motif motif is present at residues 301–305 (DDTFD).

The protein belongs to the terpene synthase family. In terms of assembly, monomer. The cofactor is Mg(2+). As to expression, expressed in roots, but not in shoots.

It localises to the cytoplasm. The enzyme catalyses (2E,6E)-farnesyl diphosphate = (+)-5-epi-aristolochene + diphosphate. The protein operates within secondary metabolite biosynthesis; terpenoid biosynthesis. Functionally, catalyzes the cyclization of trans,trans-farnesyl diphosphate (FPP) to the bicyclic intermediate 5-epi-aristolochene, initial step in the conversion of FPP to the sesquiterpenoid antifungal phytoalexin capsidiol. Produces germacrene A as an enzyme-bound intermediate that is not released by the enzyme, but is further cyclized to produce the bicyclic 5-epi-aristolochene. The sequence is that of 5-epi-aristolochene synthase 1 (EAS) from Nicotiana attenuata (Coyote tobacco).